Reading from the N-terminus, the 588-residue chain is MAAPALALVSFEDVVVTFTGEEWGHLDLAQRTLYQEVMLETCRLLVSLGHPVPKPELIYLLEHGQELWTVKRGLSQSTCAGEKAKPKITEPTASQLAFSEESSFQELLAQRSSRDSRLGQARDEEKLIKIQEGNLRPGTNPHKEICPEKLSYKHDDLEPDDSLGLRVLQERVTPQDALHECDSQGPGKDPMTDARNNPYTCTECGKGFSKKWALVRHQQIHAGVKPYECNECGKACRYMADVIRHMRLHTGEKPYKCIECGKAFKRRFHLTEHQRIHTGDKPYECKECGKAFTHRSSFIQHNMTHTREKPFLCKECGKAFYYSSSFAQHMRIHTGKKLYECGECGKAFTHRSTFIQHNVTHTGEKPFLCKECGKTFCLNSSFTQHMRIHTGEKPYECGECGKAFTHRSTFIRHKRTHTGEKPFECKECGKAFCDSSSLIQHMRIHTGEKPYECSECGKAFTHHSVFIRHNRTHSGQKPLECKECAKAFYYSSSFTRHMRIHTGEKPYVCRECGKAFTQPANFVRHNRIHTGEKPFECKECEKAFCDNFALTQHMRTHTGEKPFECNECGKTFSHSSSFTHHRKIHTRV.

In terms of domain architecture, KRAB spans 9–80 (VSFEDVVVTF…KRGLSQSTCA (72 aa)). 14 C2H2-type zinc fingers span residues 199–221 (YTCT…QQIH), 227–249 (YECN…MRLH), 255–277 (YKCI…QRIH), 283–305 (YECK…NMTH), 311–333 (FLCK…MRIH), 339–361 (YECG…NVTH), 367–389 (FLCK…MRIH), 395–417 (YECG…KRTH), 423–445 (FECK…MRIH), 451–473 (YECS…NRTH), 479–501 (LECK…MRIH), 507–529 (YVCR…NRIH), 535–557 (FECK…MRTH), and 563–585 (FECN…RKIH).

It belongs to the krueppel C2H2-type zinc-finger protein family.

It is found in the nucleus. Functionally, may be involved in transcriptional regulation. This is Zinc finger protein 599 (ZNF599) from Homo sapiens (Human).